A 736-amino-acid chain; its full sequence is Prolyl 3-hydroxylase 3 (736 aa).

Positions 1–20 (MLRLLRPLLLLLLLPPPGSP) are cleaved as a signal peptide. TPR repeat units lie at residues 37 to 70 (PDLLYADGLRAYAAGAWAPAVALLREALRSQAAL), 154 to 187 (REPYNYLQRAYYQLKKLDLAAAAAHTFFVANPMH), and 216 to 249 (HWAAYDTGLELLGRQEAGLALPRLEEALQGSLAQ). The tract at residues 253 to 275 (CRADCEGPEEQQGAEEEEDGAAS) is disordered. The span at 258-272 (EGPEEQQGAEEEEDG) shows a compositional bias: acidic residues. A TPR 4 repeat occupies 316 to 349 (PNQLRRLHEAHAQVGNLSQAIENVLSVLLFYPED). N-linked (GlcNAc...) asparagine glycans are attached at residues Asn331 and Asn462. Residues 561 to 675 (THLVCRSAIE…RCALALWHTW (115 aa)) form the Fe2OG dioxygenase domain. Fe cation-binding residues include His584, Asp586, and His656. Arg666 is a catalytic residue. Positions 681 to 709 (EQEWIEAKELLQESQEEEEEEEEEMPSKD) form a coiled coil. Residues 689-736 (ELLQESQEEEEEEEEEMPSKDPSPEPPSRRHQRVQDKTGRAPRVREEL) are disordered. Over residues 694 to 704 (SQEEEEEEEEE) the composition is skewed to acidic residues. A compositionally biased stretch (basic and acidic residues) spans 721–736 (RVQDKTGRAPRVREEL). The Prevents secretion from ER motif lies at 733–736 (REEL).

Belongs to the leprecan family. Identified in a complex with PLOD1 and P3H4. Fe cation serves as cofactor. The cofactor is L-ascorbate. Detected in fetal cartilage (at protein level). Weak expression in heart, lung, ovary and skeletal muscle.

The protein resides in the endoplasmic reticulum. The enzyme catalyses L-prolyl-[collagen] + 2-oxoglutarate + O2 = trans-3-hydroxy-L-prolyl-[collagen] + succinate + CO2. Its function is as follows. Part of a complex composed of PLOD1, P3H3 and P3H4 that catalyzes hydroxylation of lysine residues in collagen alpha chains and is required for normal assembly and cross-linkling of collagen fibrils. Required for normal hydroxylation of lysine residues in type I collagen chains in skin, bone, tendon, aorta and cornea. Required for normal skin stability via its role in hydroxylation of lysine residues in collagen alpha chains and in collagen fibril assembly. Apparently not required for normal prolyl 3-hydroxylation on collagen chains, possibly because it functions redundantly with other prolyl 3-hydroxylases. This chain is Prolyl 3-hydroxylase 3, found in Homo sapiens (Human).